The chain runs to 1669 residues: Collagen alpha-3(IV) chain (1669 aa).

An N-terminal signal peptide occupies residues 1 to 28; it reads MHSKTAPRFLVFLLLTLLLLLAASPVAS. The tract at residues 29–42 is 7S domain; sequence KGCVCKGKGQCLCA. The interval 43 to 1436 is triple-helical region; it reads GTKGEKGEKG…KGNPGDRGTP (1394 aa). Disordered stretches follow at residues 44 to 473 and 500 to 1439; these read TKGE…EPGS and PGGR…PATG. A compositionally biased stretch (low complexity) spans 54–68; the sequence is PGSPGFPGQKGFPGP. Residues 105–114 show a composition bias toward pro residues; it reads PGLPGLPGHP. Residue N126 is glycosylated (N-linked (GlcNAc...) asparagine). Pro residues predominate over residues 188–200; sequence PGFPGPAGPPGPP. The segment covering 202 to 211 has biased composition (low complexity); it reads FFGLPGAMGP. Residue N253 is glycosylated (N-linked (GlcNAc...) asparagine). The span at 255–269 shows a compositional bias: basic and acidic residues; that stretch reads SDFKGEKGDEGERGE. Composition is skewed to low complexity over residues 279 to 290 and 382 to 393; these read PGDSYGSEKGAP and SPGLSRPGLRGP. A compositionally biased stretch (pro residues) spans 416–437; that stretch reads PPGPLGCPGSPGPPGPPGPPGC. Low complexity predominate over residues 551–560; it reads NPGDPGLRGL. 2 stretches are compositionally biased toward pro residues: residues 596–617 and 654–665; these read PPGP…PPGY and LGPPGPPGPPGQ. The segment covering 666 to 684 has biased composition (low complexity); the sequence is AGPRGLPGLPGPVGKCDPG. Residues 778-787 show a composition bias toward gly residues; sequence GTPGRGGLDG. Residues 830-832 carry the Cell attachment site motif; the sequence is RGD. Residues 861–876 show a composition bias toward low complexity; it reads CPGEMGPPGQKGYPGA. Residues 922 to 939 show a composition bias toward basic and acidic residues; the sequence is KGEKGRPGAKGERGEKGK. Over residues 970–985 the composition is skewed to low complexity; that stretch reads RGNPGLPGPKGLEGLP. The Cell attachment site motif lies at 994-996; it reads RGD. Over residues 1092–1103 the composition is skewed to low complexity; it reads SGPAGPDGAPGS. The segment covering 1128–1146 has biased composition (pro residues); the sequence is PGPPGSTGPPGPPGLPGLP. A Cell attachment site motif is present at residues 1152–1154; that stretch reads RGD. Over residues 1228–1248 the composition is skewed to low complexity; the sequence is PGAIIPGPKGDRGLPGLRGNP. The span at 1250 to 1259 shows a compositional bias: pro residues; it reads EPGPPGPPGP. The Cell attachment site signature appears at 1304 to 1306; sequence RGD. Residues 1333-1343 show a composition bias toward pro residues; it reads PVGPKGPPGPR. Low complexity-rich tracts occupy residues 1366 to 1379 and 1402 to 1429; these read QPGM…LGLP and PAGT…LKGN. Residues 1425 to 1443 form an epitope recognized by Goodpasture antibodies region; that stretch reads GLKGNPGDRGTPATGTRMR. Positions 1444-1668 constitute a Collagen IV NC1 domain; that stretch reads GFIFTRHSQT…SRCQVCMKKR (225 aa). Intrachain disulfides connect C1459–C1550, C1492–C1547, C1504–C1510, C1569–C1664, C1603–C1661, and C1615–C1621. A required for the anti-angiogenic activity of tumstatin region spans residues 1478-1556; the sequence is NKRAHGQDLG…CTVCEGPAMA (79 aa). An S-Lysyl-methionine sulfilimine (Met-Lys) (interchain with K-1650) cross-link involves residue M1532. A required for the anti-tumor cell activity of tumstatin region spans residues 1609–1627; it reads ASPFIECHGRGTCNYYSNS. K1650 participates in a covalent cross-link: S-Lysyl-methionine sulfilimine (Lys-Met) (interchain with M-1532).

The protein belongs to the type IV collagen family. There are six type IV collagen isoforms, alpha 1(IV)-alpha 6(IV), each of which can form a triple helix structure with 2 other chains to generate type IV collagen network. The alpha 3(IV) chain forms a triple helical protomer with alpha 4(IV) and alpha 5(IV); this triple helical structure dimerizes through NC1-NC1 domain interactions such that the alpha 3(IV), alpha 4(IV) and alpha 5(IV) chains of one protomer connect with the alpha 5(IV), alpha 4(IV) and alpha 3(IV) chains of the opposite promoter, respectively. Interacts with ITGB3. Associates with LAMB2 at the neuromuscular junction and in GBM. In terms of processing, prolines at the third position of the tripeptide repeating unit (G-X-Y) are hydroxylated in some or all of the chains. Post-translationally, type IV collagens contain numerous cysteine residues which are involved in inter- and intramolecular disulfide bonding. 12 of these, located in the NC1 domain, are conserved in all known type IV collagens. The trimeric structure of the NC1 domains is stabilized by covalent bonds between Lys and Met residues. In terms of processing, phosphorylated. Thought to be phosphorylated by CERT, but CERT does not have kinase activity. As to expression, highly expressed in kidney and lung. Detected at lower levels in heart, muscle and skin.

It localises to the secreted. It is found in the extracellular space. The protein resides in the extracellular matrix. Its subcellular location is the basement membrane. Its function is as follows. Type IV collagen is the major structural component of glomerular basement membranes (GBM), forming a 'chicken-wire' meshwork together with laminins, proteoglycans and entactin/nidogen. Tumstatin, a cleavage fragment corresponding to the collagen alpha 3(IV) NC1 domain, possesses both anti-angiogenic and anti-tumor cell activity; these two anti-tumor properties may be regulated via RGD-independent ITGB3-mediated mechanisms. The sequence is that of Collagen alpha-3(IV) chain from Mus musculus (Mouse).